The primary structure comprises 501 residues: L-arabinose isomerase (501 aa).

The Mn(2+) site is built by Glu306, Glu333, His350, and His450.

The protein belongs to the arabinose isomerase family. As to quaternary structure, homohexamer. Mn(2+) is required as a cofactor.

The enzyme catalyses beta-L-arabinopyranose = L-ribulose. It participates in carbohydrate degradation; L-arabinose degradation via L-ribulose; D-xylulose 5-phosphate from L-arabinose (bacterial route): step 1/3. Functionally, catalyzes the conversion of L-arabinose to L-ribulose. The sequence is that of L-arabinose isomerase from Pectobacterium carotovorum subsp. carotovorum (strain PC1).